A 1357-amino-acid polypeptide reads, in one-letter code: Major yolk protein (1357 aa).

A signal peptide spans 1–15; it reads MRAAILFCLVASSMA. 2 consecutive Transferrin-like domains span residues 132-478 and 493-1101; these read VRWC…GEVY and AKIC…AIVK. Asn198, Asn227, Asn304, Asn310, Asn402, Asn499, Asn530, Asn541, Asn572, Asn578, Asn625, Asn639, Asn692, Asn732, Asn741, Asn1035, Asn1043, Asn1081, Asn1128, Asn1208, Asn1241, and Asn1258 each carry an N-linked (GlcNAc...) asparagine glycan.

Belongs to the transferrin family. In terms of tissue distribution, synthesized in the intestines of the females and males and also in ovaries and testis.

It is found in the secreted. Functionally, may serve the following two functions: a classical role as a yolk protein precursor and probably shuttle iron to developing germ cells. In Strongylocentrotus purpuratus (Purple sea urchin), this protein is Major yolk protein.